The following is an 856-amino-acid chain: Glucans biosynthesis glucosyltransferase H (856 aa).

The next 6 membrane-spanning stretches (helical) occupy residues isoleucine 144–methionine 164, isoleucine 198–methionine 218, valine 517–leucine 537, leucine 574–tryptophan 594, threonine 608–phenylalanine 628, and phenylalanine 684–isoleucine 704.

The protein belongs to the glycosyltransferase 2 family. OpgH subfamily.

It is found in the cell inner membrane. Its pathway is glycan metabolism; osmoregulated periplasmic glucan (OPG) biosynthesis. In terms of biological role, involved in the biosynthesis of osmoregulated periplasmic glucans (OPGs). This Pseudomonas fluorescens (strain ATCC BAA-477 / NRRL B-23932 / Pf-5) protein is Glucans biosynthesis glucosyltransferase H.